A 264-amino-acid polypeptide reads, in one-letter code: Thymidylate synthase (264 aa).

Residue R21 participates in dUMP binding. Position 51 (H51) interacts with (6R)-5,10-methylene-5,6,7,8-tetrahydrofolate. R126–R127 contributes to the dUMP binding site. The active-site Nucleophile is C146. DUMP is bound by residues R166 to D169, N177, and H207 to Y209. D169 is a binding site for (6R)-5,10-methylene-5,6,7,8-tetrahydrofolate. A263 serves as a coordination point for (6R)-5,10-methylene-5,6,7,8-tetrahydrofolate.

This sequence belongs to the thymidylate synthase family. Bacterial-type ThyA subfamily. As to quaternary structure, homodimer.

It is found in the cytoplasm. It catalyses the reaction dUMP + (6R)-5,10-methylene-5,6,7,8-tetrahydrofolate = 7,8-dihydrofolate + dTMP. The protein operates within pyrimidine metabolism; dTTP biosynthesis. Catalyzes the reductive methylation of 2'-deoxyuridine-5'-monophosphate (dUMP) to 2'-deoxythymidine-5'-monophosphate (dTMP) while utilizing 5,10-methylenetetrahydrofolate (mTHF) as the methyl donor and reductant in the reaction, yielding dihydrofolate (DHF) as a by-product. This enzymatic reaction provides an intracellular de novo source of dTMP, an essential precursor for DNA biosynthesis. The chain is Thymidylate synthase from Thiobacillus denitrificans (strain ATCC 25259 / T1).